Consider the following 250-residue polypeptide: Adenosine 5'-phosphosulfate reductase (250 aa).

The [4Fe-4S] cluster site is built by C119, C120, C202, and C205. The active-site Nucleophile; cysteine thiosulfonate intermediate is C230.

Belongs to the PAPS reductase family. CysH subfamily. [4Fe-4S] cluster is required as a cofactor.

The protein localises to the cytoplasm. It carries out the reaction [thioredoxin]-disulfide + sulfite + AMP + 2 H(+) = adenosine 5'-phosphosulfate + [thioredoxin]-dithiol. The protein operates within sulfur metabolism; hydrogen sulfide biosynthesis; sulfite from sulfate. Catalyzes the formation of sulfite from adenosine 5'-phosphosulfate (APS) using thioredoxin as an electron donor. This Burkholderia cepacia (Pseudomonas cepacia) protein is Adenosine 5'-phosphosulfate reductase.